A 413-amino-acid chain; its full sequence is Divalent metal cation transporter MntH (413 aa).

Topologically, residues Met-1–Leu-19 are cytoplasmic. The helical transmembrane segment at Ala-20–Ala-39 threads the bilayer. The Periplasmic portion of the chain corresponds to Thr-40–Gln-51. A helical membrane pass occupies residues Leu-52–Ala-71. Over Lys-72 to Trp-95 the chain is Cytoplasmic. The chain crosses the membrane as a helical span at residues Phe-96–Ile-118. Residues Gly-119–Gly-125 lie on the Periplasmic side of the membrane. Residues Val-126–Leu-145 traverse the membrane as a helical segment. The Cytoplasmic portion of the chain corresponds to Gln-146 to Lys-155. Residues Val-156–Ser-175 traverse the membrane as a helical segment. Residues Gln-176–Ala-196 are Periplasmic-facing. Residues Val-197–Thr-220 traverse the membrane as a helical segment. At Gln-221 to Asp-238 the chain is on the cytoplasmic side. The chain crosses the membrane as a helical span at residues Val-239 to Ala-258. Residues Ala-259 to Tyr-276 are Periplasmic-facing. Residues Leu-277–Ala-297 traverse the membrane as a helical segment. Over Ala-298–Arg-327 the chain is Cytoplasmic. The helical transmembrane segment at Arg-328–Asp-344 threads the bilayer. The Periplasmic segment spans residues Pro-345 to Val-350. Residues Met-351 to Phe-370 traverse the membrane as a helical segment. Topologically, residues Thr-371–Lys-387 are cytoplasmic. The chain crosses the membrane as a helical span at residues Gln-388 to Val-406. Residues Gly-407 to Ser-413 are Periplasmic-facing.

This sequence belongs to the NRAMP family.

It is found in the cell inner membrane. Its function is as follows. H(+)-stimulated, divalent metal cation uptake system. This is Divalent metal cation transporter MntH from Salmonella schwarzengrund (strain CVM19633).